The sequence spans 358 residues: S-adenosylmethionine decarboxylase proenzyme (358 aa).

Residues E11 and E14 contribute to the active site. S71 functions as the Schiff-base intermediate with substrate; via pyruvic acid in the catalytic mechanism. Pyruvic acid (Ser); by autocatalysis is present on S71. C85 functions as the Proton donor; for catalytic activity in the catalytic mechanism. Residues S234 and H247 each act as proton acceptor; for processing activity in the active site.

Belongs to the eukaryotic AdoMetDC family. It depends on pyruvate as a cofactor. In terms of processing, is synthesized initially as an inactive proenzyme. Formation of the active enzyme involves a self-maturation process in which the active site pyruvoyl group is generated from an internal serine residue via an autocatalytic post-translational modification. Two non-identical subunits are generated from the proenzyme in this reaction, and the pyruvate is formed at the N-terminus of the alpha chain, which is derived from the carboxyl end of the proenzyme. The post-translation cleavage follows an unusual pathway, termed non-hydrolytic serinolysis, in which the side chain hydroxyl group of the serine supplies its oxygen atom to form the C-terminus of the beta chain, while the remainder of the serine residue undergoes an oxidative deamination to produce ammonia and the pyruvoyl group blocking the N-terminus of the alpha chain.

The enzyme catalyses S-adenosyl-L-methionine + H(+) = S-adenosyl 3-(methylsulfanyl)propylamine + CO2. The protein operates within amine and polyamine biosynthesis; S-adenosylmethioninamine biosynthesis; S-adenosylmethioninamine from S-adenosyl-L-methionine: step 1/1. In Solanum chilense (Tomato), this protein is S-adenosylmethionine decarboxylase proenzyme (SAMDC).